A 237-amino-acid chain; its full sequence is MAFPPSPLAMEYVNDFDLMKFEIKREPSEGRSGVPTASLGSTPYSSVPPSPTFSEPGMVGGGEAPRPGLEELYWLATLQQQLGSDEVLGLSPDEAVELLQNQGPVSMEGPLGYYSGSPGETGAQHVQLPERFSDAALVSMSVRELNRQLRGCGRDEALRLKQRRRTLKNRGYAQACRSKRLQQRRGLEAERARLAAQLDALRAEVARLARERDLYKARCDRLTSGGPGSDDHTHLFL.

Glycyl lysine isopeptide (Lys-Gly) (interchain with G-Cter in SUMO) cross-links involve residues Lys-20 and Lys-24. Positions 26-64 are disordered; sequence EPSEGRSGVPTASLGSTPYSSVPPSPTFSEPGMVGGGEA. Residues 30 to 93 form a minimal transactivation domain (MTD) region; it reads GRSGVPTASL…SDEVLGLSPD (64 aa). Residues 159 to 185 are basic motif; the sequence is RLKQRRRTLKNRGYAQACRSKRLQQRR. Residues 159 to 222 form the bZIP domain; that stretch reads RLKQRRRTLK…DLYKARCDRL (64 aa). A leucine-zipper region spans residues 187 to 208; that stretch reads LEAERARLAAQLDALRAEVARL.

This sequence belongs to the bZIP family. In terms of assembly, interacts with FIZ1; this interaction represses transactivation. Interacts (via the leucine-zipper domain) with CRX. In terms of processing, disumoylated at Lys-20. Sumoylation modulates the transcriptional activity of NRL on RHO and NR2E3 promoters, and is required for normal rod differentiation. Phosphorylated. In terms of tissue distribution, expressed in the retina (at protein level).

The protein localises to the cytoplasm. It localises to the nucleus. Acts as a transcriptional activator which regulates the expression of several rod-specific genes, including RHO and PDE6B. Also functions as a transcriptional coactivator, stimulating transcription mediated by the transcription factor CRX and NR2E3. Binds to the rhodopsin promoter in a sequence-specific manner. This chain is Neural retina-specific leucine zipper protein (Nrl), found in Mus musculus (Mouse).